Consider the following 239-residue polypeptide: MTWRATVLTLFPEMFPGPLGISLAGKALAARLWALDIRDIRNSATDRHRSVDDTPAGGGPGMVLRADVLARAIDAAETPPGAPLLLMSPRGRPLTQSRVAELAAGPGPLIVCGRFEGVDQRIIDARGLDEISIGDYVLSGGEIAAMALIDACVRLLPGVMGKAESGEDESFSHGLLEYPQYTRPQEFEGRVIPDILLSGDHAKVAGWRRAEAEALTQERRPDLWAARATQNPPERKTNG.

S-adenosyl-L-methionine-binding positions include glycine 113 and 133 to 138; that span reads IGDYVL. A disordered region spans residues 218-239; the sequence is ERRPDLWAARATQNPPERKTNG.

The protein belongs to the RNA methyltransferase TrmD family. Homodimer.

It localises to the cytoplasm. It carries out the reaction guanosine(37) in tRNA + S-adenosyl-L-methionine = N(1)-methylguanosine(37) in tRNA + S-adenosyl-L-homocysteine + H(+). Specifically methylates guanosine-37 in various tRNAs. This chain is tRNA (guanine-N(1)-)-methyltransferase, found in Nitrobacter winogradskyi (strain ATCC 25391 / DSM 10237 / CIP 104748 / NCIMB 11846 / Nb-255).